A 751-amino-acid chain; its full sequence is Lanosterol synthase erg7A (751 aa).

The interval 1-22 (MTGGPIASWRTAAQGHLTPDEN) is disordered. One copy of the PFTB 1 repeat lies at 147 to 189 (ATEIKRYLFARQHPEDGGWGLHIEAHSSVFGTCMNYVALRLIG). Asp-481 functions as the Proton donor in the catalytic mechanism. PFTB repeat units follow at residues 508-553 (LKDS…MIGY), 585-625 (KDKA…ASVG), and 634-675 (ARRG…VQTA).

This sequence belongs to the terpene cyclase/mutase family.

It localises to the lipid droplet. The protein localises to the endoplasmic reticulum membrane. The catalysed reaction is (S)-2,3-epoxysqualene = lanosterol. The protein operates within steroid metabolism; ergosterol biosynthesis. Its function is as follows. Lanosterol synthase; part of the third module of ergosterol biosynthesis pathway that includes the late steps of the pathway. ERG7A and ERG7B catalyze the cyclization of (S)-2,3 oxidosqualene to lanosterol, a reaction that forms the sterol core. The third module or late pathway involves the ergosterol synthesis itself through consecutive reactions that mainly occur in the endoplasmic reticulum (ER) membrane. Firstly, the squalene synthase erg9 catalyzes the condensation of 2 farnesyl pyrophosphate moieties to form squalene, which is the precursor of all steroids. Squalene synthase is crucial for balancing the incorporation of farnesyl diphosphate (FPP) into sterol and nonsterol isoprene synthesis. Secondly, squalene is converted into lanosterol by the consecutive action of the squalene epoxidase erg1 and the lanosterol synthase erg7. Then, the delta(24)-sterol C-methyltransferase erg6 methylates lanosterol at C-24 to produce eburicol. Eburicol is the substrate of the sterol 14-alpha demethylase encoded by cyp51A and cyp51B, to yield 4,4,24-trimethyl ergosta-8,14,24(28)-trienol. The C-14 reductase erg24 then reduces the C14=C15 double bond which leads to 4,4-dimethylfecosterol. A sequence of further demethylations at C-4, involving the C-4 demethylation complex containing the C-4 methylsterol oxidases erg25A or erg25B, the sterol-4-alpha-carboxylate 3-dehydrogenase erg26 and the 3-keto-steroid reductase erg27, leads to the production of fecosterol via 4-methylfecosterol. The C-8 sterol isomerase erg2 then catalyzes the reaction which results in unsaturation at C-7 in the B ring of sterols and thus converts fecosterol to episterol. The sterol-C5-desaturase erg3B then catalyzes the introduction of a C-5 double bond in the B ring to produce 5-dehydroepisterol. The 2 other sterol-C5-desaturases, erg3A and erg3C, seem to be less important in ergosterol biosynthesis. The C-22 sterol desaturase erg5 further converts 5-dehydroepisterol into ergosta-5,7,22,24(28)-tetraen-3beta-ol by forming the C-22(23) double bond in the sterol side chain. Finally, ergosta-5,7,22,24(28)-tetraen-3beta-ol is substrate of the C-24(28) sterol reductases erg4A and erg4B to produce ergosterol. Possible alternative sterol biosynthetic pathways might exist from fecosterol to ergosterol, depending on the activities of the erg3 isoforms. The sequence is that of Lanosterol synthase erg7A from Aspergillus fumigatus (strain ATCC MYA-4609 / CBS 101355 / FGSC A1100 / Af293) (Neosartorya fumigata).